We begin with the raw amino-acid sequence, 218 residues long: Redox-sensing transcriptional repressor Rex (218 aa).

The H-T-H motif DNA-binding region spans 18-57; that stretch reads LYYRFIQSLHASGKQRVSSAELSEAVKVDSATIRRDFSYF. 92–97 contacts NAD(+); the sequence is GVGHLG.

This sequence belongs to the transcriptional regulatory Rex family. As to quaternary structure, homodimer.

It is found in the cytoplasm. Modulates transcription in response to changes in cellular NADH/NAD(+) redox state. This chain is Redox-sensing transcriptional repressor Rex, found in Exiguobacterium sp. (strain ATCC BAA-1283 / AT1b).